Reading from the N-terminus, the 186-residue chain is DNA damage up-regulated protein (186 aa).

The tract at residues 147–166 (ATENGEGCRPARDPASSPSS) is disordered.

As to quaternary structure, interacts with DNA damage response proteins ATR, H2AX, PCNA, RAD18 and RAD51C. Forms a complex with H2AX and RAD18 following DDUP phosphorylation. Phosphorylated in an ATR-dependent manner; phosphorylation is required for interaction with H2AX and RAD18 and for DDUP-mediated DNA damage repair.

The protein localises to the nucleus. The protein resides in the chromosome. Promotes DNA damage repair through both homologous recombination repair (HRR) and post-replication repair (PRR) mechanisms. Enhances the retention of DNA damage response protein RAD18 at sites of DNA damage. This allows for HRR via association of RAD18 with RAD51C and for PRR via RAD18-mediated promotion of PCNA monoubiquitination. This Homo sapiens (Human) protein is DNA damage up-regulated protein.